A 412-amino-acid polypeptide reads, in one-letter code: Interferon-inducible GTPase 5 (412 aa).

Residues 51 to 234 form the IRG-type G domain; that stretch reads TRLEVGVTGE…PMLVTTWEHD (184 aa). Residues 60–67, 85–89, and 215–217 each bind GTP; these read ESGAGKSS, TGVVE, and SNL. 2 positions are modified to phosphoserine: Ser246 and Ser303.

The protein belongs to the TRAFAC class dynamin-like GTPase superfamily. IRG family. In terms of assembly, interacts with PLIN2/ADRP and COX4I1/COXIV. Expressed in spermatozoa tails from the testis and epididymis, where it may be a component of the fibrous sheath (at protein level).

Its subcellular location is the cell projection. The protein localises to the cilium. The protein resides in the flagellum. It is found in the lipid droplet. The enzyme catalyses GTP + H2O = GDP + phosphate + H(+). In terms of biological role, required for sperm motility and therefore male fertility, via positive regulation of spermatozoa fibrous sheath formation. The protein is Interferon-inducible GTPase 5 of Mus musculus (Mouse).